The sequence spans 260 residues: Carbonic anhydrase 3 (260 aa).

At alanine 2 the chain carries N-acetylalanine. Residues 3-259 (KEWGYADHNG…LKGRVVRASF (257 aa)) enclose the Alpha-carbonic anhydrase domain. A phosphoserine mark is found at serine 29, serine 43, serine 50, and serine 55. Residues 64 to 67 (RTCR) are involved in proton transfer. Threonine 73 carries the post-translational modification Phosphothreonine. Zn(2+) is bound by residues histidine 94, histidine 96, and histidine 119. Tyrosine 127 is subject to Phosphotyrosine. Threonine 129 and threonine 176 each carry phosphothreonine. S-glutathionyl cysteine occurs at positions 182 and 187. Position 198–199 (198–199 (TT)) interacts with substrate. At threonine 216 the chain carries Phosphothreonine. Position 219 is a phosphoserine (serine 219).

This sequence belongs to the alpha-carbonic anhydrase family. Zn(2+) is required as a cofactor. Post-translationally, S-thiolated both by thiol-disulfide exchange with glutathione disulfide and by oxyradical-initiated S-thiolation with reduced glutathione. In terms of processing, S-glutathionylated in hepatocytes under oxidative stress.

It is found in the cytoplasm. It carries out the reaction hydrogencarbonate + H(+) = CO2 + H2O. With respect to regulation, inhibited by acetazolamide. In terms of biological role, reversible hydration of carbon dioxide. This Equus caballus (Horse) protein is Carbonic anhydrase 3 (CA3).